The primary structure comprises 202 residues: Nucleoside triphosphate pyrophosphatase (202 aa).

Asp-79 acts as the Proton acceptor in catalysis.

This sequence belongs to the Maf family. It depends on a divalent metal cation as a cofactor.

It is found in the cytoplasm. It catalyses the reaction a ribonucleoside 5'-triphosphate + H2O = a ribonucleoside 5'-phosphate + diphosphate + H(+). It carries out the reaction a 2'-deoxyribonucleoside 5'-triphosphate + H2O = a 2'-deoxyribonucleoside 5'-phosphate + diphosphate + H(+). Functionally, nucleoside triphosphate pyrophosphatase. May have a dual role in cell division arrest and in preventing the incorporation of modified nucleotides into cellular nucleic acids. In Rhodopseudomonas palustris (strain BisB18), this protein is Nucleoside triphosphate pyrophosphatase.